The following is a 519-amino-acid chain: Putative cytochrome P450 CYP13A1 (519 aa).

C465 is a binding site for heme.

Belongs to the cytochrome P450 family. Heme is required as a cofactor.

Cytochromes P450 are a group of heme-thiolate monooxygenases. They oxidize a variety of structurally unrelated compounds, including steroids, fatty acids, and xenobiotics. This Caenorhabditis elegans protein is Putative cytochrome P450 CYP13A1 (cyp-13A1).